The chain runs to 145 residues: Basic phospholipase A2 cPm05 (145 aa).

The N-terminal stretch at 1–21 (MYPAHLLVLLAVCISLLGASA) is a signal peptide. Positions 22-27 (IPPLPL) are excised as a propeptide. Intrachain disulfides connect C38/C98, C54/C144, C56/C72, C71/C125, C78/C118, C87/C111, and C105/C116. Y55, G57, and G59 together coordinate Ca(2+). H75 is a catalytic residue. D76 lines the Ca(2+) pocket. D119 is a catalytic residue.

The protein belongs to the phospholipase A2 family. Group I subfamily. D49 sub-subfamily. Ca(2+) is required as a cofactor. In terms of tissue distribution, expressed by the venom gland.

It is found in the secreted. It carries out the reaction a 1,2-diacyl-sn-glycero-3-phosphocholine + H2O = a 1-acyl-sn-glycero-3-phosphocholine + a fatty acid + H(+). In terms of biological role, PLA2 catalyzes the calcium-dependent hydrolysis of the 2-acyl groups in 3-sn-phosphoglycerides. This chain is Basic phospholipase A2 cPm05, found in Laticauda semifasciata (Black-banded sea krait).